The sequence spans 1462 residues: MRIQKRRTHVENILRILLPPIMILSLILPTPPIHAEESAAPQVHLSILATTDIHANMMDYDYYSDKETADFGLARTAQLIQKHREQNPNTLLVDNGDLIQGNPLGEYAVKYQKDDIISGTKTHPIISVMNALKYDAGTLGNHEFNYGLDFLDGTIKGADFPIVNANVKTTSGENRYTPYVINEKTLIDENGNEQKVKVGYIGFVPPQIMTWDKKNLEGQVQVQDIVESANETIPKMKAEGADVIIALAHTGIEKQAQSSGAENAVFDLATKTKGIDAIISGHQHGLFPSAEYAGVAQFNVEKGTINGIPVVMPSSWGKYLGVIDLKLEKADGSWKVADSKGSIESIAGNVTSRNETVTNTIQQTHQNTLEYVRKPVGKTEADINSFFAQVKDDPSIQIVTDAQKWYAEKEMKDTEYKNLPILSAGAPFKAGGRNGANYYTNIPAGDLAIKNVGDLYLYDNTVQIVKLTGSEVKDWLEMSAGQFNQIDPAKGGDQALLNENFRSYNFDVIDGVTYQVDVTKPAKYNENGKVINADSSRIINLSYEGKPISPSQEFLVVTNNYRASGGGGFPHLTSDKIVHGSAVENRQVLMDYIIEQKTVNPKADNNWSIAPVSGTNLTFESSLLAKPFADKADDVAYVGKSANEGYGVYKLQFDDDSNPDPPKDGLWDLTVMHTNDTHAHLDDAARRMTKINEVRSETNHNILLDAGDVFSGDLYFTKWNGLADLKMMNMMGYDAMTFGNHEFDKGPTVLSDFLSGNSATVDPANRYHFEAPEFPIVSANVDVSNEPKLKSFVKKPQTFTAGEKKEAGIHPYILLDVDGEKVAVFGLTTEDTATTSSPGKSIVFNDAFETAQNTVKAIQEEEKVNKIIALTHIGHNRDLELAKKVKGIDLIIGGHTHTLVDKMEVVNNEEPTIVAQAKEYGQFLGRVDVAFDEKGVVQTDKSNLSVLPIDEHTEENPEAKQELDQFKNELEDVKNEKVGYTDVALDGQREHVRTKETNLGNFIADGMLAKAKEAAGARIAITNGGGIRAGIDKGDITLGEVLNVMPFGNTLYVADLTGKQIKEALEQGLSNVENGGGAFPQVAGIEYTFTLNNKPGHRVLEVKIESPNGDKVAINTDDTYRVATNNFVGAGGDGYSVFTEASHGEDLGYVDYEIFTEQLKKLGNKVSPKVEGRIKEVFLPTKQKDGSWTLDEDKFAIYAKNANTPFVYYGIHEGSQEKPINLKVKKDQVKLLKERESDPSLTMFNYWYSMKMPMANLKTADTAIGIKSTGELDVSLSDVYDFTVKQKGKEIKSFKEPVQLSLRMFDIEEAHNPAIYHVDRKKKAFTKTGHGSVDDDMVTGYTNHFSEYTILNSGSNNKPPAFPSDQPTGGDDGNHGGGSDKPGGKQPTDGNGGNDTPPGTQPTNGSGGNGSGGSGTDGPAGGLLPDTATSMYSILLAGFLISALGTAMYLHQRRKQNRANQA.

Residues 1–35 form the signal peptide; the sequence is MRIQKRRTHVENILRILLPPIMILSLILPTPPIHA. The tract at residues 36–623 is 2',3'-cyclic nucleotide 2'-phosphodiesterase/3'-nucleotidase; that stretch reads EESAAPQVHL…GTNLTFESSL (588 aa). Positions 52, 54, 97, 141, 249, 282, and 284 each coordinate a divalent metal cation. Residues Y458 and 561-567 each bind a ribonucleoside 3'-phosphate; that span reads YRASGGG. Residues 624-1427 form a 5'-nucleotidase region; it reads LAKPFADKAD…GPAGGLLPDT (804 aa). 7 residues coordinate a divalent metal cation: D676, H678, D708, N740, H872, H895, and H897. Residues F1047 and 1127–1133 each bind a ribonucleoside 5'-phosphate; that span reads FVGAGGD. The disordered stretch occupies residues 1350-1422; that stretch reads ILNSGSNNKP…GSGTDGPAGG (73 aa). Positions 1405–1421 are enriched in gly residues; it reads GSGGNGSGGSGTDGPAG. The LPXTG sorting signal motif lies at 1424 to 1428; it reads LPDTA. The residue at position 1427 (T1427) is a Pentaglycyl murein peptidoglycan amidated threonine. A propeptide spans 1428–1462 (removed by sortase); it reads ATSMYSILLAGFLISALGTAMYLHQRRKQNRANQA.

Belongs to the 5'-nucleotidase family. A divalent metal cation serves as cofactor.

The protein resides in the secreted. It localises to the cell wall. It carries out the reaction a nucleoside 2',3'-cyclic phosphate + H2O = a nucleoside 3'-phosphate + H(+). It catalyses the reaction a ribonucleoside 3'-phosphate + H2O = a ribonucleoside + phosphate. The enzyme catalyses a ribonucleoside 5'-phosphate + H2O = a ribonucleoside + phosphate. Functionally, catalyzes the release of inorganic phosphate from 2',3'-cyclic nucleotides through consecutive 2',3'-phosphodiesterase and 3'- (or 2') nucleotidase activities. Also possesses a 5'-nucleotidase activity. Does not catalyze the release of inorganic phosphate from 3',5'-cyclic nucleotides. Probably plays a role in the cellular reprocessing of nucleotides present in the medium, under conditions of phosphate shortage. The polypeptide is Trifunctional nucleotide phosphoesterase protein YfkN (yfkN) (Bacillus subtilis (strain 168)).